The chain runs to 287 residues: Inorganic pyrophosphatase (287 aa).

Residue R79 participates in diphosphate binding. Residues D116, D121, and D153 each coordinate Mg(2+).

This sequence belongs to the PPase family. As to quaternary structure, homodimer. Mg(2+) is required as a cofactor.

It localises to the cytoplasm. It catalyses the reaction diphosphate + H2O = 2 phosphate + H(+). This chain is Inorganic pyrophosphatase (IPP1), found in Kluyveromyces lactis (strain ATCC 8585 / CBS 2359 / DSM 70799 / NBRC 1267 / NRRL Y-1140 / WM37) (Yeast).